The chain runs to 270 residues: Regulatory protein RecX (270 aa).

Belongs to the RecX family.

It is found in the cytoplasm. Its function is as follows. Modulates RecA activity. The protein is Regulatory protein RecX of Bacillus cereus (strain ZK / E33L).